Consider the following 620-residue polypeptide: Magnesium-chelatase 67 kDa subunit (620 aa).

An ATP-binding site is contributed by Ser33–Ser40. The tract at residues Ala272–Thr322 is disordered. Residues Gln296–Thr322 show a composition bias toward acidic residues. A VWFA domain is found at Leu432 to Ser620.

The protein belongs to the Mg-chelatase subunits D/I family.

It catalyses the reaction protoporphyrin IX + Mg(2+) + ATP + H2O = Mg-protoporphyrin IX + ADP + phosphate + 3 H(+). Its pathway is porphyrin-containing compound metabolism; bacteriochlorophyll biosynthesis. Its function is as follows. Involved in bacteriochlorophyll biosynthesis; introduces a magnesium ion into protoporphyrin IX to yield Mg-protoporphyrin IX. The chain is Magnesium-chelatase 67 kDa subunit (bchD) from Chlorobaculum tepidum (strain ATCC 49652 / DSM 12025 / NBRC 103806 / TLS) (Chlorobium tepidum).